Here is a 295-residue protein sequence, read N- to C-terminus: Glutamyl-Q tRNA(Asp) synthetase (295 aa).

Residues 5–9 and Glu-41 each bind L-glutamate; that span reads RFAPS. Residues 8 to 18 carry the 'HIGH' region motif; the sequence is PSPTGLLHIGS. The Zn(2+) site is built by Cys-97, Cys-99, Tyr-117, and Cys-121. L-glutamate contacts are provided by Tyr-178 and Arg-196. A 'KMSKS' region motif is present at residues 234 to 238; it reads KWSKQ. Lys-237 lines the ATP pocket.

The protein belongs to the class-I aminoacyl-tRNA synthetase family. GluQ subfamily. The cofactor is Zn(2+).

Catalyzes the tRNA-independent activation of glutamate in presence of ATP and the subsequent transfer of glutamate onto a tRNA(Asp). Glutamate is transferred on the 2-amino-5-(4,5-dihydroxy-2-cyclopenten-1-yl) moiety of the queuosine in the wobble position of the QUC anticodon. The chain is Glutamyl-Q tRNA(Asp) synthetase from Neisseria meningitidis serogroup C / serotype 2a (strain ATCC 700532 / DSM 15464 / FAM18).